The primary structure comprises 61 residues: Probable tautomerase lmo2564 (61 aa).

Catalysis depends on Pro2, which acts as the Proton acceptor; via imino nitrogen.

The protein belongs to the 4-oxalocrotonate tautomerase family.

The chain is Probable tautomerase lmo2564 from Listeria monocytogenes serovar 1/2a (strain ATCC BAA-679 / EGD-e).